Consider the following 1504-residue polypeptide: DNA-directed RNA polymerase subunit beta' (1504 aa).

4 residues coordinate Zn(2+): C60, C62, C75, and C78. The disordered stretch occupies residues 265 to 294 (RKQRDLEDAEQLTGAERERKEYEASQERER). Positions 279–294 (AERERKEYEASQERER) are enriched in basic and acidic residues. Positions 626, 628, and 630 each coordinate Mg(2+). The Zn(2+) site is built by C1002, C1075, C1082, and C1085. The disordered stretch occupies residues 1468–1504 (RALIGGDGDDGERNNGDFDDQVGEDVVIPPDDDDQEA).

This sequence belongs to the RNA polymerase beta' chain family. In terms of assembly, the RNAP catalytic core consists of 2 alpha, 1 beta, 1 beta' and 1 omega subunit. When a sigma factor is associated with the core the holoenzyme is formed, which can initiate transcription. Mg(2+) is required as a cofactor. Zn(2+) serves as cofactor.

It carries out the reaction RNA(n) + a ribonucleoside 5'-triphosphate = RNA(n+1) + diphosphate. Its function is as follows. DNA-dependent RNA polymerase catalyzes the transcription of DNA into RNA using the four ribonucleoside triphosphates as substrates. This Roseiflexus sp. (strain RS-1) protein is DNA-directed RNA polymerase subunit beta'.